A 93-amino-acid chain; its full sequence is Alpha-defensin 16 (93 aa).

Residues 1 to 19 (MKTLILLSALVLLAFQVQA) form the signal peptide. Residues 20-58 (DPIQNTDEETKTEEQPGEEDQAVSVSFGDPEGTSLQEES) constitute a propeptide that is removed on maturation. The disordered stretch occupies residues 22-54 (IQNTDEETKTEEQPGEEDQAVSVSFGDPEGTSL). 3 disulfide bridges follow: C64–C92, C66–C81, and C71–C91.

This sequence belongs to the alpha-defensin family. As to expression, paneth cells of the small bowel.

It localises to the secreted. Its function is as follows. Probably contributes to the antimicrobial barrier function of the small bowel mucosa. The protein is Alpha-defensin 16 (Defa16) of Mus musculus (Mouse).